A 321-amino-acid polypeptide reads, in one-letter code: Glutaminase (321 aa).

7 residues coordinate substrate: S69, N120, E165, N172, Y196, Y248, and V266.

This sequence belongs to the glutaminase family. In terms of assembly, homotetramer.

The catalysed reaction is L-glutamine + H2O = L-glutamate + NH4(+). This Bacteroides thetaiotaomicron (strain ATCC 29148 / DSM 2079 / JCM 5827 / CCUG 10774 / NCTC 10582 / VPI-5482 / E50) protein is Glutaminase.